The sequence spans 1108 residues: Retinal guanylyl cyclase 1 (1108 aa).

A signal peptide spans 1–54 (MSAWLLPAGGFPGAGFCIPAWQSRSSLSRVLRWPGPGLPGLLLLLLLPSPSAFS). Over 55–465 (AVFKVGVLGP…PDVICNGGVE (411 aa)) the chain is Extracellular. Cys108 and Cys136 form a disulfide bridge. Residue Asn300 is glycosylated (N-linked (GlcNAc...) asparagine). The chain crosses the membrane as a helical span at residues 466-490 (PGLVFVGFLLVIVVGLTGAFLAHYL). The Cytoplasmic segment spans residues 491 to 1108 (RHRLLHMQMV…KARPGQFTGK (618 aa)). Residues 520–552 (GGSSRKVAQGSRSSLATRSTSDIRSVPSQPQES) are disordered. The Protein kinase domain maps to 520–811 (GGSSRKVAQG…DLTFDLFKGI (292 aa)). The segment covering 529–552 (GSRSSLATRSTSDIRSVPSQPQES) has biased composition (polar residues). Residues 883–1013 (TLYFSDIVGF…DTVNTASRME (131 aa)) enclose the Guanylate cyclase domain. The disordered stretch occupies residues 1069-1108 (IPKPPDLQPGASNHGISLQEIPPERRKKLEKARPGQFTGK).

The protein belongs to the adenylyl cyclase class-4/guanylyl cyclase family. Homodimer; requires homodimerization for guanylyl cyclase activity. Interacts (via C-terminus) with RD3 (via C-terminus); promotes the exit of GUCY2E from the endoplasmic reticulum and its trafficking to the photoreceptor outer segments. Interaction with RD3 negatively regulates GUCY2E guanylate cyclase activity. In terms of processing, there are 9 conserved cysteine residues in sensory guanylate cyclases, 6 in the extracellular domain, which may be involved in intra- or interchain disulfide bonds. In terms of tissue distribution, expressed in retina and enriched in photoreceptor outer segments.

The protein resides in the membrane. It is found in the photoreceptor outer segment membrane. It localises to the endoplasmic reticulum membrane. The catalysed reaction is GTP = 3',5'-cyclic GMP + diphosphate. Activated by GUCA1A when free calcium ions concentration is low, and inhibited by GUCA1A when free calcium ions concentration is high. Negatively regulated by RD3; inhibits the basal and GUCA1A-stimulated guanylate cyclase activity. Functionally, catalyzes the synthesis of cyclic GMP (cGMP) in rods and cones of photoreceptors. Plays an essential role in phototransduction, by mediating cGMP replenishment. May also participate in the trafficking of membrane-asociated proteins to the photoreceptor outer segment membrane. The chain is Retinal guanylyl cyclase 1 (Gucy2e) from Rattus norvegicus (Rat).